The primary structure comprises 418 residues: Replication factor C large subunit (418 aa).

Residue 47 to 54 (GSQGTGKT) coordinates ATP.

Belongs to the activator 1 small subunits family. RfcL subfamily. Heteromultimer composed of small subunits (RfcS) and large subunits (RfcL).

Its function is as follows. Part of the RFC clamp loader complex which loads the PCNA sliding clamp onto DNA. The chain is Replication factor C large subunit from Thermoplasma acidophilum (strain ATCC 25905 / DSM 1728 / JCM 9062 / NBRC 15155 / AMRC-C165).